A 126-amino-acid chain; its full sequence is uncharacterized protein (126 aa).

Basic residues-rich tracts occupy residues 21–31 (RKKRKKRKKRR) and 41–83 (RILK…RKRR). Residues 21–83 (RKKRKKRKKR…RSPRKRRKRR (63 aa)) form a disordered region.

This is an uncharacterized protein from Saccharomyces cerevisiae (strain ATCC 204508 / S288c) (Baker's yeast).